Here is a 137-residue protein sequence, read N- to C-terminus: uncharacterized protein (137 aa).

Residues 1–32 are disordered; it reads MRDHLPPGLPPDPFADDPCDPSAALDAVEPGQ.

The protein to M.tuberculosis Rv3412.

This is an uncharacterized protein from Mycobacterium leprae (strain TN).